A 141-amino-acid chain; its full sequence is Hemoglobin subunit alpha (141 aa).

Residues 1–141 (VLSPADKTNV…VSTVLTSKYR (141 aa)) enclose the Globin domain. Ser-3 bears the Phosphoserine mark. Position 7 is an N6-succinyllysine (Lys-7). At Thr-8 the chain carries Phosphothreonine. Residue Lys-11 is modified to N6-succinyllysine. N6-acetyllysine; alternate is present on Lys-16. N6-succinyllysine; alternate is present on Lys-16. Residue Tyr-24 is modified to Phosphotyrosine. Residue Lys-40 is modified to N6-succinyllysine. Ser-49 bears the Phosphoserine mark. His-58 is an O2 binding site. His-87 serves as a coordination point for heme b. Ser-102 bears the Phosphoserine mark. Phosphothreonine is present on Thr-108. Residue Ser-124 is modified to Phosphoserine. Phosphothreonine occurs at positions 134 and 137. Ser-138 bears the Phosphoserine mark.

The protein belongs to the globin family. Heterotetramer of two alpha chains and two beta chains. As to expression, red blood cells.

Its function is as follows. Involved in oxygen transport from the lung to the various peripheral tissues. Functionally, hemopressin acts as an antagonist peptide of the cannabinoid receptor CNR1. Hemopressin-binding efficiently blocks cannabinoid receptor CNR1 and subsequent signaling. The polypeptide is Hemoglobin subunit alpha (HBA) (Phoca vitulina (Harbor seal)).